The following is a 347-amino-acid chain: NADH-ubiquinone oxidoreductase chain 2 (347 aa).

11 helical membrane passes run 3–23, 25–45, 59–79, 96–116, 122–142, 149–169, 178–198, 200–220, 237–257, 274–294, and 325–345; these read PPIL…VLTS, HWLT…PILM, YLLT…IDLL, AMMT…FWVP, IHMS…LSIL, INPN…GWGG, ILAY…LYNP, MMIL…MLFM, APLI…LPPL, EMII…YFYM, and LLSP…LLSI.

Belongs to the complex I subunit 2 family. As to quaternary structure, core subunit of respiratory chain NADH dehydrogenase (Complex I) which is composed of 45 different subunits. Interacts with TMEM242.

The protein resides in the mitochondrion inner membrane. The catalysed reaction is a ubiquinone + NADH + 5 H(+)(in) = a ubiquinol + NAD(+) + 4 H(+)(out). In terms of biological role, core subunit of the mitochondrial membrane respiratory chain NADH dehydrogenase (Complex I) which catalyzes electron transfer from NADH through the respiratory chain, using ubiquinone as an electron acceptor. Essential for the catalytic activity and assembly of complex I. The protein is NADH-ubiquinone oxidoreductase chain 2 of Cynictis penicillata (Yellow mongoose).